The primary structure comprises 183 residues: MPNFWILENRRSYTSDTCMSRIVKEYKVILKTLASDDPIANPYRGIIESLNPIDETDLSKWEAIISGPSDTPYENHQFRILIEVPSSYPMNPPKISFMQNNILHCNVKSATGEICLNILKPEEWTPVWDLLHCVHAVWRLLREPVCDSPLDVDIGNIIRCGDMSAYQGIVKYFLAERERINNH.

Positions 17-179 (TCMSRIVKEY…VKYFLAERER (163 aa)) constitute a UBC core domain. The active-site Glycyl thioester intermediate is C115.

Belongs to the ubiquitin-conjugating enzyme family.

The protein localises to the peroxisome. The catalysed reaction is S-ubiquitinyl-[E1 ubiquitin-activating enzyme]-L-cysteine + [E2 ubiquitin-conjugating enzyme]-L-cysteine = [E1 ubiquitin-activating enzyme]-L-cysteine + S-ubiquitinyl-[E2 ubiquitin-conjugating enzyme]-L-cysteine.. The protein operates within protein modification; protein ubiquitination. In terms of biological role, catalyzes the covalent attachment of ubiquitin to other proteins. Essential for peroxisome biogenesis. Required for UBC4-independent ubiquitination of PEX5. The chain is Ubiquitin-conjugating enzyme E2-21 kDa (PEX4) from Saccharomyces cerevisiae (strain ATCC 204508 / S288c) (Baker's yeast).